A 280-amino-acid polypeptide reads, in one-letter code: MLERAQRTLKREVRYSGVGIHFGKSATLTLEPAKENTGIVFCRSDLLGERIPALLPHVYNTGRSTTLSAGDSVIATVEHLMAALRSSNIDNVIVRCSEEEIPIGDGSSHVFMQLIDDAGICTQNDKVPIARLSQPVYYQSQDTFLAAFPCDELKISYTLHYPQSPTIGTQYRSFVITEESFRKEIAPCRTFALYNELCFLMDRGLIRGGCLENAVVFKDDGVISLGQLRFSDEPVRHKILDLIGDLSLVGRPFVAHIVAVGSGHSSNIALGRKILEVLQP.

Residues His79, His237, and Asp241 each coordinate Zn(2+). His264 acts as the Proton donor in catalysis.

The protein belongs to the LpxC family. The cofactor is Zn(2+).

It carries out the reaction a UDP-3-O-[(3R)-3-hydroxyacyl]-N-acetyl-alpha-D-glucosamine + H2O = a UDP-3-O-[(3R)-3-hydroxyacyl]-alpha-D-glucosamine + acetate. It participates in glycolipid biosynthesis; lipid IV(A) biosynthesis; lipid IV(A) from (3R)-3-hydroxytetradecanoyl-[acyl-carrier-protein] and UDP-N-acetyl-alpha-D-glucosamine: step 2/6. Functionally, catalyzes the hydrolysis of UDP-3-O-myristoyl-N-acetylglucosamine to form UDP-3-O-myristoylglucosamine and acetate, the committed step in lipid A biosynthesis. The protein is UDP-3-O-acyl-N-acetylglucosamine deacetylase of Chlamydia caviae (strain ATCC VR-813 / DSM 19441 / 03DC25 / GPIC) (Chlamydophila caviae).